The sequence spans 335 residues: Fructose-1,6-bisphosphatase class 1 (335 aa).

Residues glutamate 90, aspartate 112, leucine 114, and aspartate 115 each contribute to the Mg(2+) site. Substrate is bound by residues 115-118 (DGSS), asparagine 210, and lysine 276. Residue glutamate 282 coordinates Mg(2+).

It belongs to the FBPase class 1 family. Homotetramer. The cofactor is Mg(2+).

It is found in the cytoplasm. It catalyses the reaction beta-D-fructose 1,6-bisphosphate + H2O = beta-D-fructose 6-phosphate + phosphate. Its pathway is carbohydrate biosynthesis; gluconeogenesis. This is Fructose-1,6-bisphosphatase class 1 from Ectopseudomonas mendocina (strain ymp) (Pseudomonas mendocina).